A 226-amino-acid polypeptide reads, in one-letter code: Lipoprotein-releasing system ATP-binding protein LolD 1 (226 aa).

The ABC transporter domain maps to 5-225 (LKLDGIRKSY…IVRVVDGKIA (221 aa)). 42–49 (GPSGSGKS) serves as a coordination point for ATP.

Belongs to the ABC transporter superfamily. Lipoprotein translocase (TC 3.A.1.125) family. As to quaternary structure, the complex is composed of two ATP-binding proteins (LolD) and two transmembrane proteins (LolC and LolE).

The protein resides in the cell inner membrane. Part of the ABC transporter complex LolCDE involved in the translocation of mature outer membrane-directed lipoproteins, from the inner membrane to the periplasmic chaperone, LolA. Responsible for the formation of the LolA-lipoprotein complex in an ATP-dependent manner. This is Lipoprotein-releasing system ATP-binding protein LolD 1 from Rhodopseudomonas palustris (strain ATCC BAA-98 / CGA009).